Reading from the N-terminus, the 940-residue chain is Gamma-aminobutyric acid type B receptor subunit 2 (940 aa).

The N-terminal stretch at 1–40 (MASPPSSGQPRPPPPPPPPARLLLPLLLSLLLSLAPGAWG) is a signal peptide. Residues 41–482 (WARGAPRPPP…LRKISLPLYS (442 aa)) lie on the Extracellular side of the membrane. N-linked (GlcNAc...) asparagine glycosylation occurs at Asn-89. 3 cysteine pairs are disulfide-bonded: Cys-107/Cys-134, Cys-236/Cys-265, and Cys-264/Cys-301. Asn-297, Asn-388, Asn-403, and Asn-452 each carry an N-linked (GlcNAc...) asparagine glycan. A helical membrane pass occupies residues 483-503 (ILSALTILGMIMASAFLFFNI). The Cytoplasmic portion of the chain corresponds to 504 to 521 (KNRNQKLIKMSSPYMNNL). The helical transmembrane segment at 522 to 542 (IILGGMLSYASIFLFGLDGSF) threads the bilayer. Topologically, residues 543 to 550 (VSEKTFET) are extracellular. A helical membrane pass occupies residues 551–571 (LCTVRTWILTVGYTTAFGAMF). Topologically, residues 572-596 (AKTWRVHAIFKNVKMKKKIIKDQKL) are cytoplasmic. A helical transmembrane segment spans residues 597 to 617 (LVIVGGMLLIDLCILICWQAV). Residues 618–653 (DPLRRTVERYSMEPDPAGRDISIRPLLEHCENTHMT) are Extracellular-facing. Residues 654-674 (IWLGIVYAYKGLLMLFGCFLA) traverse the membrane as a helical segment. The Cytoplasmic segment spans residues 675–690 (WETRNVSIPALNDSKY). Residues 691 to 711 (IGMSVYNVGIMCIIGAAVSFL) traverse the membrane as a helical segment. The Extracellular portion of the chain corresponds to 712–719 (TRDQPNVQ). A helical membrane pass occupies residues 720-740 (FCIVALVIIFCSTITLCLVFV). Residues 741–940 (PKLITLRTNP…PSFRVMVSGL (200 aa)) are Cytoplasmic-facing. Residues 762–789 (TQNQKKEDSKTSTSVTSVNQASTSRLEG) are disordered. Positions 772–786 (TSTSVTSVNQASTSR) are enriched in polar residues. Phosphoserine occurs at positions 775 and 778. Residues 781–818 (QASTSRLEGLQSENHRLRMKITELDKDLEEVTMQLQDT) adopt a coiled-coil conformation. Residue Thr-818 is modified to Phosphothreonine. 6 positions are modified to phosphoserine: Ser-883, Ser-892, Ser-912, Ser-915, Ser-919, and Ser-923.

The protein belongs to the G-protein coupled receptor 3 family. GABA-B receptor subfamily. As to quaternary structure, heterodimer of GABBR1 and GABBR2. Homodimers may form, but are inactive. Interacts (via C-terminus) with ATF4 (via leucine zipper domain).

It localises to the cell membrane. Its subcellular location is the postsynaptic cell membrane. Component of a heterodimeric G-protein coupled receptor for GABA, formed by GABBR1 and GABBR2. Within the heterodimeric GABA receptor, only GABBR1 seems to bind agonists, while GABBR2 mediates coupling to G proteins. Ligand binding causes a conformation change that triggers signaling via guanine nucleotide-binding proteins (G proteins) and modulates the activity of down-stream effectors, such as adenylate cyclase. Signaling inhibits adenylate cyclase, stimulates phospholipase A2, activates potassium channels, inactivates voltage-dependent calcium-channels and modulates inositol phospholipid hydrolysis. Plays a critical role in the fine-tuning of inhibitory synaptic transmission. Pre-synaptic GABA receptor inhibits neurotransmitter release by down-regulating high-voltage activated calcium channels, whereas postsynaptic GABA receptor decreases neuronal excitability by activating a prominent inwardly rectifying potassium (Kir) conductance that underlies the late inhibitory postsynaptic potentials. Not only implicated in synaptic inhibition but also in hippocampal long-term potentiation, slow wave sleep, muscle relaxation and antinociception. Interacts with KCTD8, KCTD12 and KCTD16; this interaction determines the pharmacology and kinetics of the receptor response, the KCTD proteins markedly accelerating the GABA-B response, although to different extents. The polypeptide is Gamma-aminobutyric acid type B receptor subunit 2 (Gabbr2) (Mus musculus (Mouse)).